Reading from the N-terminus, the 93-residue chain is Chaperone NapD (93 aa).

The protein belongs to the NapD family. In terms of assembly, interacts with the cytoplasmic NapA precursor.

It is found in the cytoplasm. Functionally, chaperone for NapA, the catalytic subunit of the periplasmic nitrate reductase. It binds directly and specifically to the twin-arginine signal peptide of NapA, preventing premature interaction with the Tat translocase and premature export. The protein is Chaperone NapD of Haemophilus influenzae (strain ATCC 51907 / DSM 11121 / KW20 / Rd).